Reading from the N-terminus, the 225-residue chain is Uracil-DNA glycosylase (225 aa).

Asp-65 acts as the Proton acceptor in catalysis.

This sequence belongs to the uracil-DNA glycosylase (UDG) superfamily. UNG family.

The protein localises to the cytoplasm. The catalysed reaction is Hydrolyzes single-stranded DNA or mismatched double-stranded DNA and polynucleotides, releasing free uracil.. Excises uracil residues from the DNA which can arise as a result of misincorporation of dUMP residues by DNA polymerase or due to deamination of cytosine. This chain is Uracil-DNA glycosylase, found in Alkaliphilus oremlandii (strain OhILAs) (Clostridium oremlandii (strain OhILAs)).